Here is a 249-residue protein sequence, read N- to C-terminus: Tegument protein UL51 homolog (249 aa).

The protein belongs to the herpesviridae UL51 family. In terms of assembly, oligomerizes. Interacts with MDV019; this interaction mediates MDV019 incorporation to virions. Phosphorylated.

Its subcellular location is the virion tegument. It localises to the host cytoplasm. The protein localises to the host Golgi apparatus. Plays several roles during the time course of infection, including egress of virus particles from the perinuclear space and secondary envelopment of cytoplasmic capsids that bud into specific trans-Golgi network (TGN)-derived membranes. The polypeptide is Tegument protein UL51 homolog (MDV065) (Gallus gallus (Chicken)).